We begin with the raw amino-acid sequence, 297 residues long: 32 kDa beta-galactoside-binding lectin lec-3 (297 aa).

Galectin domains lie at 11–142 (YRSK…VQWG) and 151–290 (ESGI…IQVV). Residue 224-230 (WGNEERE) participates in a beta-D-galactoside binding.

Binds galactose. This chain is 32 kDa beta-galactoside-binding lectin lec-3 (lec-3), found in Caenorhabditis elegans.